Here is a 398-residue protein sequence, read N- to C-terminus: Carboxyaminopropylagmatine dehydrogenase (398 aa).

The protein belongs to the saccharopine dehydrogenase family.

The enzyme catalyses N(1)-[(S)-3-amino-3-carboxypropyl]agmatine + NADP(+) + H2O = L-aspartate 4-semialdehyde + agmatine + NADPH + H(+). The protein operates within amine and polyamine biosynthesis; spermidine biosynthesis. In terms of biological role, dehydrogenase involved in the biosynthesis of spermidine via the carboxyaminopropylagmatine (CAPA) pathway. Catalyzes the reductive condensation of agmatine and L-aspartate-beta-semialdehyde (ASA) into CAPA. Shows activity toward putrescine and 1,3-diaminopropane, but the catalytic efficiency is three to four orders of magnitude lower than that for agmatine. Cannot use cadaverine or spermidine. The protein is Carboxyaminopropylagmatine dehydrogenase of Synechocystis sp. (strain ATCC 27184 / PCC 6803 / Kazusa).